The primary structure comprises 365 residues: Succinyl-diaminopimelate desuccinylase (365 aa).

Residue His64 participates in Zn(2+) binding. Asp66 is a catalytic residue. Asp95 lines the Zn(2+) pocket. The active-site Proton acceptor is the Glu125. Positions 126, 154, and 339 each coordinate Zn(2+).

It belongs to the peptidase M20A family. DapE subfamily. Homodimer. Zn(2+) serves as cofactor. Co(2+) is required as a cofactor.

The enzyme catalyses N-succinyl-(2S,6S)-2,6-diaminopimelate + H2O = (2S,6S)-2,6-diaminopimelate + succinate. The protein operates within amino-acid biosynthesis; L-lysine biosynthesis via DAP pathway; LL-2,6-diaminopimelate from (S)-tetrahydrodipicolinate (succinylase route): step 3/3. Its function is as follows. Catalyzes the hydrolysis of N-succinyl-L,L-diaminopimelic acid (SDAP), forming succinate and LL-2,6-diaminopimelate (DAP), an intermediate involved in the bacterial biosynthesis of lysine and meso-diaminopimelic acid, an essential component of bacterial cell walls. In Campylobacter fetus subsp. fetus (strain 82-40), this protein is Succinyl-diaminopimelate desuccinylase.